The primary structure comprises 89 residues: Large ribosomal subunit protein bL31B (89 aa).

It belongs to the bacterial ribosomal protein bL31 family. Type B subfamily. As to quaternary structure, part of the 50S ribosomal subunit.

In Aeromonas salmonicida (strain A449), this protein is Large ribosomal subunit protein bL31B.